The sequence spans 469 residues: Tetratricopeptide repeat protein 38 (469 aa).

3 TPR repeats span residues 107 to 140 (REKLHVAAVETFADGNLPKAADLWERILQSHPTD), 179 to 212 (SYVKGMYSFGLLETNFYDQALKVAKEALAVERTD), and 251 to 284 (CHVYWHWALYLIEKGDYEAALTLYDNHIAPQCFA).

Belongs to the TTC38 family.

The sequence is that of Tetratricopeptide repeat protein 38 (ttc38) from Xenopus laevis (African clawed frog).